A 491-amino-acid chain; its full sequence is Ketol-acid reductoisomerase (NADP(+)) (491 aa).

One can recognise a KARI N-terminal Rossmann domain in the interval 14–208 (LDQLGRCRFM…GGHRAGVLES (195 aa)). NADP(+)-binding positions include 45-48 (CGAQ), arginine 68, arginine 76, serine 78, and 108-110 (DKQ). The active site involves histidine 132. Glycine 158 contributes to the NADP(+) binding site. 2 consecutive KARI C-terminal knotted domains span residues 209–344 (SFVA…NAPK) and 345–485 (YEGK…MTDM). Aspartate 217, glutamate 221, glutamate 389, and glutamate 393 together coordinate Mg(2+). Serine 414 contacts substrate.

This sequence belongs to the ketol-acid reductoisomerase family. The cofactor is Mg(2+).

It carries out the reaction (2R)-2,3-dihydroxy-3-methylbutanoate + NADP(+) = (2S)-2-acetolactate + NADPH + H(+). It catalyses the reaction (2R,3R)-2,3-dihydroxy-3-methylpentanoate + NADP(+) = (S)-2-ethyl-2-hydroxy-3-oxobutanoate + NADPH + H(+). It participates in amino-acid biosynthesis; L-isoleucine biosynthesis; L-isoleucine from 2-oxobutanoate: step 2/4. Its pathway is amino-acid biosynthesis; L-valine biosynthesis; L-valine from pyruvate: step 2/4. In terms of biological role, involved in the biosynthesis of branched-chain amino acids (BCAA). Catalyzes an alkyl-migration followed by a ketol-acid reduction of (S)-2-acetolactate (S2AL) to yield (R)-2,3-dihydroxy-isovalerate. In the isomerase reaction, S2AL is rearranged via a Mg-dependent methyl migration to produce 3-hydroxy-3-methyl-2-ketobutyrate (HMKB). In the reductase reaction, this 2-ketoacid undergoes a metal-dependent reduction by NADPH to yield (R)-2,3-dihydroxy-isovalerate. This Pasteurella multocida (strain Pm70) protein is Ketol-acid reductoisomerase (NADP(+)).